Here is a 558-residue protein sequence, read N- to C-terminus: Nuclear speckle splicing regulatory protein 1 (558 aa).

The tract at residues 21–54 is disordered; that stretch reads PVLQKPSVFGNDSDDDDETSVSESLQREAAKKQA. Residues Ser27 and Ser33 each carry the phosphoserine modification. Residues 104 to 170 adopt a coiled-coil conformation; it reads IHNLLKAVEI…REKRAAALEA (67 aa). Positions 106–170 are necessary for alternative splicing activity; that stretch reads NLLKAVEIRK…REKRAAALEA (65 aa). Residues Lys199 and Lys210 each participate in a glycyl lysine isopeptide (Lys-Gly) (interchain with G-Cter in SUMO2) cross-link. A compositionally biased stretch (basic and acidic residues) spans 204–215; sequence EARSGIKEEKSR. The disordered stretch occupies residues 204–534; the sequence is EARSGIKEEK…KRNNEETVMS (331 aa). Residues 216-226 are compositionally biased toward polar residues; that stretch reads GFSNEVSSKNR. Residues Ser248, Ser254, and Ser255 each carry the phosphoserine modification. A compositionally biased stretch (basic and acidic residues) spans 250-280; it reads FDAKSSADDEIEETRVNCRREKVIETPENDF. Phosphothreonine is present on Thr275. Residue Lys281 forms a Glycyl lysine isopeptide (Lys-Gly) (interchain with G-Cter in SUMO2) linkage. The span at 299 to 310 shows a compositional bias: basic residues; the sequence is STRHHTKGSRTS. 3 stretches are compositionally biased toward basic and acidic residues: residues 311–442, 449–487, and 501–517; these read RGHE…KREV, RNQD…RNQE, and RLTE…ERPP. The stretch at 379–427 forms a coiled coil; the sequence is KREKDREKYSQREQERDRQQNDQNRPSEKGEKEEKSKAKEEHMKVRKER. Ser457 bears the Phosphoserine mark.

This sequence belongs to the NSRP1 family. Interacts (via C-terminus) with SRSF1. Interacts (via C-terminus) with SRSF2. As to expression, expressed in dendritic cells, T-cells, B-cells and natural killer cells. Expressed in secondary lymphoid organs such as spleen and mesenteric, axillary and brachial lymph nodes.

The protein resides in the nucleus. It is found in the nucleus speckle. RNA-binding protein that mediates pre-mRNA alternative splicing regulation. This Homo sapiens (Human) protein is Nuclear speckle splicing regulatory protein 1 (NSRP1).